Here is a 418-residue protein sequence, read N- to C-terminus: EPS I polysaccharide export inner membrane protein EpsF (418 aa).

10 consecutive transmembrane segments (helical) span residues valine 21–isoleucine 41, cysteine 45–alanine 65, proline 142–tyrosine 162, tyrosine 170–isoleucine 190, alanine 222–leucine 242, leucine 262–methionine 282, serine 296–leucine 316, methionine 326–glycine 346, alanine 347–alanine 367, and lysine 377–alanine 397.

This sequence to S.marcescens SfuB.

It localises to the cell inner membrane. Its function is as follows. Probably involved in polymerization and/or export of exopolysaccharide EPS I which functions as a virulence factor. May play a role in export of EPS I or its intermediates across the membranes. In Ralstonia nicotianae (strain ATCC BAA-1114 / GMI1000) (Ralstonia solanacearum), this protein is EPS I polysaccharide export inner membrane protein EpsF (epsF).